The chain runs to 704 residues: Metabotropic glutamate receptor-like protein K (704 aa).

The signal sequence occupies residues 1-21; sequence MIKLILSIILIICFIINSIES. Topologically, residues 22 to 383 are extracellular; sequence FKMITLTTGP…SKVEFQRSIQ (362 aa). N-linked (GlcNAc...) asparagine glycosylation is found at Asn-66, Asn-104, Asn-256, Asn-286, Asn-308, Asn-337, Asn-343, and Asn-368. Residues 384-404 traverse the membrane as a helical segment; that stretch reads IGFSIVSGLLIGFVILMMIGI. The Cytoplasmic segment spans residues 405 to 419; sequence VKYQDTPSIRSASPS. The helical transmembrane segment at 420 to 440 threads the bilayer; that stretch reads FLNLTLLGGVIIFIGIIVWVA. Topologically, residues 441-455 are extracellular; it reads PISTHQCNARFWLVT. Residues 456–476 traverse the membrane as a helical segment; the sequence is IGFSTLIGSLVVKNIRIWLIF. Residues 477–492 lie on the Cytoplasmic side of the membrane; sequence DNPELKIRTITNNQLY. The helical transmembrane segment at 493 to 513 threads the bilayer; sequence PWVGLCLVINIVLMSIITTVG. Residues 514–541 are Extracellular-facing; it reads DLKAIEAQGIDSLGKFEYMTICKMNYTG. An N-linked (GlcNAc...) asparagine glycan is attached at Asn-538. A helical transmembrane segment spans residues 542-562; the sequence is AATLYSILAYFGTLLLVGVFV. At 563 to 578 the chain is on the cytoplasmic side; sequence SWKIRIVHIEEFSECT. Residues 579-599 traverse the membrane as a helical segment; sequence AIAKTLYSISFCLFVIVPLMI. The Extracellular portion of the chain corresponds to 600–608; sequence SPQDKQSET. The helical transmembrane segment at 609–629 threads the bilayer; that stretch reads IILCVTGIFITTGALLIFFLP. Residues 630–704 lie on the Cytoplasmic side of the membrane; sequence KFWRIFGNEK…NESSLSNETK (75 aa). 2 disordered regions span residues 657–677 and 685–704; these read ARAE…SKSS and SGIE…NETK.

In the N-terminal section; belongs to the BMP lipoprotein family. The protein in the C-terminal section; belongs to the G-protein coupled receptor 3 family. GABA-B receptor subfamily.

The protein localises to the membrane. This Dictyostelium discoideum (Social amoeba) protein is Metabotropic glutamate receptor-like protein K (grlK).